Reading from the N-terminus, the 403-residue chain is Phosphoglycerate kinase (403 aa).

Substrate is bound by residues 21-23 (DFN), R36, 59-62 (HLGR), R119, and R159. ATP contacts are provided by residues K214, G301, E332, and 359–362 (GGDS).

This sequence belongs to the phosphoglycerate kinase family. In terms of assembly, monomer.

The protein resides in the cytoplasm. It carries out the reaction (2R)-3-phosphoglycerate + ATP = (2R)-3-phospho-glyceroyl phosphate + ADP. It participates in carbohydrate degradation; glycolysis; pyruvate from D-glyceraldehyde 3-phosphate: step 2/5. The polypeptide is Phosphoglycerate kinase (Lactobacillus gasseri (strain ATCC 33323 / DSM 20243 / BCRC 14619 / CIP 102991 / JCM 1131 / KCTC 3163 / NCIMB 11718 / NCTC 13722 / AM63)).